We begin with the raw amino-acid sequence, 185 residues long: Monooxygenase hypC (185 aa).

3 helical membrane-spanning segments follow: residues 35–55 (TGTFLSGAMMSLFLLTIPVIL), 75–95 (GHIQGPLISIATGLLYSYAAY), and 106–126 (PFAVSAAVTVAMIPFTWVFMA). N-linked (GlcNAc...) asparagine glycosylation is present at N129. Residues 165-185 (ALFPLSGAVLGLLSTCKIVSF) traverse the membrane as a helical segment.

This sequence belongs to the anthrone oxygenase family.

The protein resides in the membrane. The protein operates within mycotoxin biosynthesis. Monooxygenase; part of the fragmented gene cluster that mediates the biosynthesis of dothistromin (DOTH), a polyketide toxin very similar in structure to the aflatoxin precursor, versicolorin B. The first step of the pathway is the conversion of acetate to norsolorinic acid (NOR) and requires the fatty acid synthase subunits hexA and hexB, as well as the polyketide synthase pksA. PksA combines a hexanoyl starter unit and 7 malonyl-CoA extender units to synthesize the precursor NOR. The hexanoyl starter unit is provided to the acyl-carrier protein (ACP) domain by the fungal fatty acid synthase hexA/hexB. The second step is the conversion of NOR to averantin (AVN) and requires the norsolorinic acid ketoreductase nor1, which catalyzes the dehydration of norsolorinic acid to form (1'S)-averantin. The cytochrome P450 monooxygenase avnA then catalyzes the hydroxylation of AVN to 5'hydroxyaverantin (HAVN). The next step is performed by adhA that transforms HAVN to averufin (AVF). Averufin might then be converted to hydroxyversicolorone by cypX and avfA. Hydroxyversicolorone is further converted versiconal hemiacetal acetate (VHA) by moxY. VHA is then the substrate for the versiconal hemiacetal acetate esterase est1 to yield versiconal (VAL). Versicolorin B synthase vbsA then converts VAL to versicolorin B (VERB) by closing the bisfuran ring. Then, the activity of the versicolorin B desaturase verB leads to versicolorin A (VERA). DotB, a predicted chloroperoxidase, may perform epoxidation of the A-ring of VERA. Alternatively, a cytochrome P450, such as cypX or avnA could catalyze this step. It is also possible that another, uncharacterized, cytochrome P450 enzyme is responsible for this step. Opening of the epoxide could potentially be achieved by the epoxide hydrolase epoA. However, epoA seems not to be required for DOTH biosynthesis, but other epoxide hydrolases may have the ability to complement this hydrolysis. Alternatively, opening of the epoxide ring could be achieved non-enzymatically. The next step is the deoxygenation of ring A to yield the 5,8-dihydroxyanthraquinone which is most likely catalyzed by the NADPH dehydrogenase encoded by ver1. The last stages of DOTH biosynthesis are proposed to involve hydroxylation of the bisfuran. OrdB and norB might have oxidative roles here. An alternative possibility is that cytochrome P450 monoogenases such as avnA and cypX might perform these steps in addition to previously proposed steps. This is Monooxygenase hypC from Dothistroma septosporum (strain NZE10 / CBS 128990) (Red band needle blight fungus).